Reading from the N-terminus, the 954-residue chain is Glycine dehydrogenase (decarboxylating) (954 aa).

Lys-704 is modified (N6-(pyridoxal phosphate)lysine).

This sequence belongs to the GcvP family. In terms of assembly, the glycine cleavage system is composed of four proteins: P, T, L and H. It depends on pyridoxal 5'-phosphate as a cofactor.

The enzyme catalyses N(6)-[(R)-lipoyl]-L-lysyl-[glycine-cleavage complex H protein] + glycine + H(+) = N(6)-[(R)-S(8)-aminomethyldihydrolipoyl]-L-lysyl-[glycine-cleavage complex H protein] + CO2. The glycine cleavage system catalyzes the degradation of glycine. The P protein binds the alpha-amino group of glycine through its pyridoxal phosphate cofactor; CO(2) is released and the remaining methylamine moiety is then transferred to the lipoamide cofactor of the H protein. This chain is Glycine dehydrogenase (decarboxylating), found in Rhizobium johnstonii (strain DSM 114642 / LMG 32736 / 3841) (Rhizobium leguminosarum bv. viciae).